Consider the following 100-residue polypeptide: Trp operon repressor homolog (100 aa).

A DNA-binding region spans residues 59–82 (QRQISQMLGVGIATITRGSNELKS). Positions 78 to 93 (NELKSKSDTDKDKLKT) are enriched in basic and acidic residues. Residues 78–100 (NELKSKSDTDKDKLKTLLEQGAQ) are disordered.

It belongs to the TrpR family. Homodimer.

It localises to the cytoplasm. In terms of biological role, this protein is an aporepressor. When complexed with L-tryptophan it binds the operator region of the trp operon and prevents the initiation of transcription. The chain is Trp operon repressor homolog from Vibrio campbellii (strain ATCC BAA-1116).